Consider the following 224-residue polypeptide: Urease accessory protein UreF (224 aa).

Belongs to the UreF family. UreD, UreF and UreG form a complex that acts as a GTP-hydrolysis-dependent molecular chaperone, activating the urease apoprotein by helping to assemble the nickel containing metallocenter of UreC. The UreE protein probably delivers the nickel.

It localises to the cytoplasm. Functionally, required for maturation of urease via the functional incorporation of the urease nickel metallocenter. This is Urease accessory protein UreF from Klebsiella pneumoniae subsp. pneumoniae (strain ATCC 700721 / MGH 78578).